The sequence spans 189 residues: GTPase NRas (189 aa).

Residues 10–18 (GAGGVGKSA) and 29–30 (VD) contribute to the GTP site. The Effector region motif lies at 32–40 (YDPTIEDSY). Residue 57–61 (DTAGQ) participates in GTP binding. Serine 89 carries the phosphoserine modification. 116–119 (NKCD) is a GTP binding site. The interval 166-185 (YRLKKLNSSDDGTQGCMGSP) is hypervariable region. Lysine 170 is covalently cross-linked (Glycyl lysine isopeptide (Lys-Gly) (interchain with G-Cter in ubiquitin)). Cysteine 181 carries S-palmitoyl cysteine lipidation. A lipid anchor (S-farnesyl cysteine) is attached at cysteine 186. A propeptide spans 187–189 (VLM) (removed in mature form).

It belongs to the small GTPase superfamily. Ras family. Interacts (active GTP-bound form preferentially) with RGS14. Interacts (active GTP-bound form) with RASSF7. Interacts (active GTP-bound form) with both SHOC2 and PP1c (all isoforms) to form a tertiary complex; SHOC2 and PP1c preferably bind M-Ras/MRAS, but they also bind K-Ras/KRAS, N-Ras/NRAS and H-Ras/HRAS. In terms of processing, palmitoylated by the ZDHHC9-GOLGA7 complex. Depalmitoylated by ABHD17A, ABHD17B and ABHD17C. A continuous cycle of de- and re-palmitoylation regulates rapid exchange between plasma membrane and Golgi. Acetylation at Lys-104 prevents interaction with guanine nucleotide exchange factors (GEFs). Post-translationally, ubiquitinated by the BCR(LZTR1) E3 ubiquitin ligase complex at Lys-170 in a non-degradative manner, leading to inhibit Ras signaling by decreasing Ras association with membranes. In terms of processing, phosphorylation at Ser-89 enhances NRAS association with its downstream effectors.

The protein localises to the cell membrane. Its subcellular location is the golgi apparatus membrane. The catalysed reaction is GTP + H2O = GDP + phosphate + H(+). Its activity is regulated as follows. Alternates between an inactive form bound to GDP and an active form bound to GTP. Activated by a guanine nucleotide-exchange factor (GEF) and inactivated by a GTPase-activating protein (GAP). In terms of biological role, ras proteins bind GDP/GTP and possess intrinsic GTPase activity. The chain is GTPase NRas (Nras) from Mus musculus (Mouse).